The following is a 142-amino-acid chain: Large ribosomal subunit protein uL11 (142 aa).

This sequence belongs to the universal ribosomal protein uL11 family. In terms of assembly, part of the ribosomal stalk of the 50S ribosomal subunit. Interacts with L10 and the large rRNA to form the base of the stalk. L10 forms an elongated spine to which L12 dimers bind in a sequential fashion forming a multimeric L10(L12)X complex. In terms of processing, one or more lysine residues are methylated.

Forms part of the ribosomal stalk which helps the ribosome interact with GTP-bound translation factors. The chain is Large ribosomal subunit protein uL11 from Methylocella silvestris (strain DSM 15510 / CIP 108128 / LMG 27833 / NCIMB 13906 / BL2).